The following is a 570-amino-acid chain: Interleukin-1 receptor accessory protein (570 aa).

The first 20 residues, 1-20, serve as a signal peptide directing secretion; that stretch reads MTLLWCVVSLYFYGILQSDA. Ig-like C2-type domains lie at 21-128, 136-226, and 242-350; these read SERC…VAFP, SCFN…FHLT, and PPVI…VKQK. At 21–367 the chain is on the extracellular side; sequence SERCDDWGLD…VELACGFGAT (347 aa). Disulfide bonds link Cys-24-Cys-122, Cys-47-Cys-114, Cys-137-Cys-181, Cys-160-Cys-212, and Cys-266-Cys-332. The N-linked (GlcNAc...) asparagine glycan is linked to Asn-57. The segment at 69–85 is essential for interaction with PTPRD; sequence IWYWTRQDRDLEEPINF. Asn-107, Asn-111, and Asn-118 each carry an N-linked (GlcNAc...) asparagine glycan. 3 N-linked (GlcNAc...) asparagine glycosylation sites follow: Asn-196, Asn-209, and Asn-299. A helical membrane pass occupies residues 368–388; sequence VLLVVILIVVYHVYWLEMVLF. Residues 389–570 are Cytoplasmic-facing; sequence YRAHFGTDET…GLSYSSLKNV (182 aa). A TIR domain is found at 403-546; it reads KEYDIYVSYA…RFWKQLQVAM (144 aa). Residue Glu-482 is part of the active site. The disordered stretch occupies residues 549 to 570; that stretch reads KKSPRRSSSDEQGLSYSSLKNV. Ser-557 carries the phosphoserine modification. The segment covering 558–570 has biased composition (polar residues); the sequence is DEQGLSYSSLKNV.

It belongs to the interleukin-1 receptor family. In terms of assembly, the interleukin-36 receptor complex is a heterodimer of IL1RL2 and IL1RAP; the association is inhibited by IL36RN. The interleukin-1 receptor complex is a heterodimer of IL1R1 and IL1RAP. Associates with IL1R2 to form a non-signaling interleukin-1 receptor complex. Interacts with IL-33-bound IL1RL1 to form the minimal interleukin-33 signaling complex with a 1:1:1 stoichiometry. Interacts with KIT (independently of stimulation with KITLG/SCF). A mast cell-specific KITLG/SCF-induced interleukin-33 signaling complex contains IL1RL1, IL1RAP, KIT and MYD88. Interacts (via the first immunoglobilin domain) with PTPRD (via the third immunoglobilin domain); induces pre- and postsynaptic differentiation of neurons.

The protein resides in the cell membrane. The protein localises to the secreted. It carries out the reaction NAD(+) + H2O = ADP-D-ribose + nicotinamide + H(+). Coreceptor for IL1RL2 in the IL-36 signaling system. Coreceptor with IL1R1 in the IL-1 signaling system. Associates with IL1R1 bound to IL1B to form the high affinity interleukin-1 receptor complex which mediates interleukin-1-dependent activation of NF-kappa-B and other pathways. Signaling involves the recruitment of adapter molecules such as TOLLIP, MYD88, and IRAK1 or IRAK2 via the respective TIR domains of the receptor/coreceptor subunits. Recruits TOLLIP to the signaling complex. Does not bind to interleukin-1 alone; binding of IL1RN to IL1R1, prevents its association with IL1R1 to form a signaling complex. The cellular response is modulated through a non-signaling association with the membrane IL1R2 decoy receptor. Coreceptor for IL1RL1 in the IL-33 signaling system. Can bidirectionally induce pre- and postsynaptic differentiation of neurons by trans-synaptically binding to PTPRD. May play a role in IL1B-mediated costimulation of IFNG production from T-helper 1 (Th1) cells. Its function is as follows. Associates with secreted ligand-bound IL1R2 and increases the affinity of secreted IL1R2 for IL1B; this complex formation may be the dominant mechanism for neutralization of IL1B by secreted/soluble receptors. Enhances the ability of secreted IL1R1 to inhibit IL-33 signaling. The chain is Interleukin-1 receptor accessory protein (IL1RAP) from Macaca mulatta (Rhesus macaque).